A 368-amino-acid polypeptide reads, in one-letter code: Phosphate acyltransferase (368 aa).

This sequence belongs to the PlsX family. Homodimer. Probably interacts with PlsY.

The protein localises to the cytoplasm. It carries out the reaction a fatty acyl-[ACP] + phosphate = an acyl phosphate + holo-[ACP]. It participates in lipid metabolism; phospholipid metabolism. Its function is as follows. Catalyzes the reversible formation of acyl-phosphate (acyl-PO(4)) from acyl-[acyl-carrier-protein] (acyl-ACP). This enzyme utilizes acyl-ACP as fatty acyl donor, but not acyl-CoA. The chain is Phosphate acyltransferase from Cereibacter sphaeroides (strain ATCC 17025 / ATH 2.4.3) (Rhodobacter sphaeroides).